Reading from the N-terminus, the 255-residue chain is Large ribosomal subunit protein uL4 (255 aa).

Belongs to the universal ribosomal protein uL4 family. In terms of assembly, part of the 50S ribosomal subunit.

Functionally, one of the primary rRNA binding proteins, this protein initially binds near the 5'-end of the 23S rRNA. It is important during the early stages of 50S assembly. It makes multiple contacts with different domains of the 23S rRNA in the assembled 50S subunit and ribosome. Its function is as follows. Forms part of the polypeptide exit tunnel. This chain is Large ribosomal subunit protein uL4, found in Pyrococcus horikoshii (strain ATCC 700860 / DSM 12428 / JCM 9974 / NBRC 100139 / OT-3).